A 133-amino-acid chain; its full sequence is Mediator of RNA polymerase II transcription subunit 10 (133 aa).

The span at 1-13 (MSTEASTGETPEF) shows a compositional bias: polar residues. Residues 1–28 (MSTEASTGETPEFQSYDHRGSPTQEAMK) form a disordered region. Positions 15–28 (SYDHRGSPTQEAMK) are enriched in basic and acidic residues.

The protein belongs to the Mediator complex subunit 10 family. Component of the Mediator complex.

Its subcellular location is the nucleus. Component of the Mediator complex, a coactivator involved in the regulated transcription of nearly all RNA polymerase II-dependent genes. Mediator functions as a bridge to convey information from gene-specific regulatory proteins to the basal RNA polymerase II transcription machinery. Mediator is recruited to promoters by direct interactions with regulatory proteins and serves as a scaffold for the assembly of a functional preinitiation complex with RNA polymerase II and the general transcription factors. This chain is Mediator of RNA polymerase II transcription subunit 10 (NUT2), found in Phaeosphaeria nodorum (strain SN15 / ATCC MYA-4574 / FGSC 10173) (Glume blotch fungus).